Consider the following 157-residue polypeptide: Small ribosomal subunit protein uS7 (157 aa).

Belongs to the universal ribosomal protein uS7 family. As to quaternary structure, part of the 30S ribosomal subunit. Contacts proteins S9 and S11.

Its function is as follows. One of the primary rRNA binding proteins, it binds directly to 16S rRNA where it nucleates assembly of the head domain of the 30S subunit. Is located at the subunit interface close to the decoding center, probably blocks exit of the E-site tRNA. The protein is Small ribosomal subunit protein uS7 of Delftia acidovorans (strain DSM 14801 / SPH-1).